Consider the following 366-residue polypeptide: Ferrochelatase (366 aa).

The Fe cation site is built by His210 and Glu293.

Belongs to the ferrochelatase family.

The protein localises to the cytoplasm. The catalysed reaction is heme b + 2 H(+) = protoporphyrin IX + Fe(2+). The protein operates within porphyrin-containing compound metabolism; protoheme biosynthesis; protoheme from protoporphyrin-IX: step 1/1. Catalyzes the ferrous insertion into protoporphyrin IX. This is Ferrochelatase from Leptospira borgpetersenii serovar Hardjo-bovis (strain JB197).